The sequence spans 673 residues: DNA ligase (673 aa).

NAD(+) contacts are provided by residues aspartate 34–aspartate 38, serine 83–leucine 84, and glutamate 116. Catalysis depends on lysine 118, which acts as the N6-AMP-lysine intermediate. Residues arginine 139, glutamate 176, lysine 293, and lysine 317 each contribute to the NAD(+) site. Positions 411, 414, 429, and 435 each coordinate Zn(2+). The 79-residue stretch at asparagine 595–serine 673 folds into the BRCT domain.

The protein belongs to the NAD-dependent DNA ligase family. LigA subfamily. The cofactor is Mg(2+). It depends on Mn(2+) as a cofactor.

The catalysed reaction is NAD(+) + (deoxyribonucleotide)n-3'-hydroxyl + 5'-phospho-(deoxyribonucleotide)m = (deoxyribonucleotide)n+m + AMP + beta-nicotinamide D-nucleotide.. Functionally, DNA ligase that catalyzes the formation of phosphodiester linkages between 5'-phosphoryl and 3'-hydroxyl groups in double-stranded DNA using NAD as a coenzyme and as the energy source for the reaction. It is essential for DNA replication and repair of damaged DNA. In Legionella pneumophila subsp. pneumophila (strain Philadelphia 1 / ATCC 33152 / DSM 7513), this protein is DNA ligase.